Consider the following 270-residue polypeptide: Formamidopyrimidine-DNA glycosylase (270 aa).

The Schiff-base intermediate with DNA role is filled by P2. The active-site Proton donor is the E3. K58 serves as the catalytic Proton donor; for beta-elimination activity. DNA contacts are provided by H91, R110, and K151. The segment at 236–270 (FAYGRGGQPCKVCGTTLREIKLGQRASVYCPKCQR) adopts an FPG-type zinc-finger fold. R260 acts as the Proton donor; for delta-elimination activity in catalysis.

Belongs to the FPG family. As to quaternary structure, monomer. Zn(2+) is required as a cofactor.

It carries out the reaction Hydrolysis of DNA containing ring-opened 7-methylguanine residues, releasing 2,6-diamino-4-hydroxy-5-(N-methyl)formamidopyrimidine.. The enzyme catalyses 2'-deoxyribonucleotide-(2'-deoxyribose 5'-phosphate)-2'-deoxyribonucleotide-DNA = a 3'-end 2'-deoxyribonucleotide-(2,3-dehydro-2,3-deoxyribose 5'-phosphate)-DNA + a 5'-end 5'-phospho-2'-deoxyribonucleoside-DNA + H(+). In terms of biological role, involved in base excision repair of DNA damaged by oxidation or by mutagenic agents. Acts as a DNA glycosylase that recognizes and removes damaged bases. Has a preference for oxidized purines, such as 7,8-dihydro-8-oxoguanine (8-oxoG). Has AP (apurinic/apyrimidinic) lyase activity and introduces nicks in the DNA strand. Cleaves the DNA backbone by beta-delta elimination to generate a single-strand break at the site of the removed base with both 3'- and 5'-phosphates. This Pseudomonas syringae pv. tomato (strain ATCC BAA-871 / DC3000) protein is Formamidopyrimidine-DNA glycosylase.